The sequence spans 421 residues: Putative NBPF family member NBPF7 (421 aa).

Residues 87-143 adopt a coiled-coil conformation; sequence IKSMLREELQFKEEKLAEQLKQAEELRQYKVLVHSQERELIQLREKLREGRDASHSL. Disordered regions lie at residues 179–251, 312–334, and 402–421; these read VHKL…KITS, EKEV…HDVS, and YNSK…FTED. 2 consecutive Olduvai domains span residues 190-279 and 280-391; these read EDEN…NILL and ENQN…RMSQ. Residues 194-217 are compositionally biased toward basic and acidic residues; the sequence is DKTKELDKVQESPAPREEQKAEEK. Residues 230–243 are compositionally biased toward polar residues; that stretch reads TYSNSHGPSDSNPP. The segment covering 312-333 has biased composition (basic and acidic residues); sequence EKEVLQDSPEERVTTSCSDHDV. Residues 403–421 are compositionally biased toward polar residues; it reads NSKPSSIPNTTLQGSFTED.

Belongs to the NBPF family.

Its subcellular location is the cytoplasm. The protein is Putative NBPF family member NBPF7 of Homo sapiens (Human).